The sequence spans 356 residues: Probable neutral protease 2 homolog ARB_04769 (356 aa).

Residues 1–17 (MQFTALLAALGAPLALA) form the signal peptide. The propeptide occupies 18-183 (ASIPAAAHNH…DDSTGVIDKR (166 aa)). Disulfide bonds link Cys191–Cys262 and Cys269–Cys287. Asn205 carries N-linked (GlcNAc...) asparagine glycosylation. His311 contributes to the Zn(2+) binding site. Residue Glu312 is part of the active site. Residues His315 and Asp326 each contribute to the Zn(2+) site.

Belongs to the peptidase M35 family. Requires Zn(2+) as cofactor.

It is found in the secreted. It catalyses the reaction Preferential cleavage of bonds with hydrophobic residues in P1'. Also 3-Asn-|-Gln-4 and 8-Gly-|-Ser-9 bonds in insulin B chain.. Functionally, probable secreted metalloprotease that shows high activities on basic nuclear substrates such as histone and protamine. May be involved in virulence. In Arthroderma benhamiae (strain ATCC MYA-4681 / CBS 112371) (Trichophyton mentagrophytes), this protein is Probable neutral protease 2 homolog ARB_04769.